The following is a 336-amino-acid chain: tRNA N6-adenosine threonylcarbamoyltransferase (336 aa).

Positions 114 and 118 each coordinate Fe cation. Residues 136–140, Asp169, Gly182, Asp186, and Asn275 each bind substrate; that span reads LVSGG. Asp301 is a Fe cation binding site.

The protein belongs to the KAE1 / TsaD family. Requires Fe(2+) as cofactor.

Its subcellular location is the cytoplasm. The catalysed reaction is L-threonylcarbamoyladenylate + adenosine(37) in tRNA = N(6)-L-threonylcarbamoyladenosine(37) in tRNA + AMP + H(+). Its function is as follows. Required for the formation of a threonylcarbamoyl group on adenosine at position 37 (t(6)A37) in tRNAs that read codons beginning with adenine. Is involved in the transfer of the threonylcarbamoyl moiety of threonylcarbamoyl-AMP (TC-AMP) to the N6 group of A37, together with TsaE and TsaB. TsaD likely plays a direct catalytic role in this reaction. This Streptococcus pneumoniae (strain ATCC 700669 / Spain 23F-1) protein is tRNA N6-adenosine threonylcarbamoyltransferase.